The primary structure comprises 210 residues: Peroxynitrite isomerase (210 aa).

Residues 21–27 (GQWEGQG) carry the GXWXGXG motif. Heme b is bound at residue H190.

This sequence belongs to the nitrobindin family. Homodimer. It depends on heme b as a cofactor.

It carries out the reaction peroxynitrite = nitrate. The protein operates within nitrogen metabolism. Heme-binding protein able to scavenge peroxynitrite and to protect free L-tyrosine against peroxynitrite-mediated nitration, by acting as a peroxynitrite isomerase that converts peroxynitrite to nitrate. Therefore, this protein likely plays a role in peroxynitrite sensing and in the detoxification of reactive nitrogen and oxygen species (RNS and ROS, respectively). Is able to bind nitric oxide (NO) in vitro, but may act as a sensor of peroxynitrite levels in vivo. The polypeptide is Peroxynitrite isomerase (Renibacterium salmoninarum (strain ATCC 33209 / DSM 20767 / JCM 11484 / NBRC 15589 / NCIMB 2235)).